We begin with the raw amino-acid sequence, 372 residues long: Serine proteinase inhibitor 1 (372 aa).

This sequence belongs to the serpin family. Poxviruses subfamily.

The protein localises to the host cytoplasm. Plays a role in mediating viral host range. May act to inhibit a caspase independent form of apoptosis to allow efficient virus replication in infected cells. The chain is Serine proteinase inhibitor 1 (OPG208) from Homo sapiens (Human).